The sequence spans 874 residues: Alanine--tRNA ligase (874 aa).

Residues H562, H566, C664, and H668 each coordinate Zn(2+).

The protein belongs to the class-II aminoacyl-tRNA synthetase family. The cofactor is Zn(2+).

It is found in the cytoplasm. The catalysed reaction is tRNA(Ala) + L-alanine + ATP = L-alanyl-tRNA(Ala) + AMP + diphosphate. Its function is as follows. Catalyzes the attachment of alanine to tRNA(Ala) in a two-step reaction: alanine is first activated by ATP to form Ala-AMP and then transferred to the acceptor end of tRNA(Ala). Also edits incorrectly charged Ser-tRNA(Ala) and Gly-tRNA(Ala) via its editing domain. This is Alanine--tRNA ligase from Neisseria meningitidis serogroup C / serotype 2a (strain ATCC 700532 / DSM 15464 / FAM18).